Here is a 375-residue protein sequence, read N- to C-terminus: Succinyl-diaminopimelate desuccinylase (375 aa).

Zn(2+) is bound at residue His66. The active site involves Asp68. Asp99 is a binding site for Zn(2+). Glu133 serves as the catalytic Proton acceptor. Residues Glu134, Glu162, and His348 each contribute to the Zn(2+) site.

The protein belongs to the peptidase M20A family. DapE subfamily. In terms of assembly, homodimer. Zn(2+) serves as cofactor. The cofactor is Co(2+).

It catalyses the reaction N-succinyl-(2S,6S)-2,6-diaminopimelate + H2O = (2S,6S)-2,6-diaminopimelate + succinate. The protein operates within amino-acid biosynthesis; L-lysine biosynthesis via DAP pathway; LL-2,6-diaminopimelate from (S)-tetrahydrodipicolinate (succinylase route): step 3/3. Catalyzes the hydrolysis of N-succinyl-L,L-diaminopimelic acid (SDAP), forming succinate and LL-2,6-diaminopimelate (DAP), an intermediate involved in the bacterial biosynthesis of lysine and meso-diaminopimelic acid, an essential component of bacterial cell walls. This chain is Succinyl-diaminopimelate desuccinylase, found in Escherichia coli O7:K1 (strain IAI39 / ExPEC).